Here is a 232-residue protein sequence, read N- to C-terminus: Small heat shock protein, chloroplastic (232 aa).

A compositionally biased stretch (polar residues) spans 1–25; that stretch reads MAQSVSLSTIASPILSQKPGSSVKS. Disordered regions lie at residues 1–35 and 48–81; these read MAQS…SFPL and RAQA…RKPR. Residues 1–46 constitute a chloroplast transit peptide; it reads MAQSVSLSTIASPILSQKPGSSVKSTPPCMASFPLRRQLPRLGLRN. The span at 55–78 shows a compositional bias: basic and acidic residues; sequence GDNKDNSVEVHRVNKDDQGTAVER. The region spanning 124 to 232 is the sHSP domain; it reads IGGGEIRVPW…ERTVIDVQIQ (109 aa).

Belongs to the small heat shock protein (HSP20) family.

The protein localises to the plastid. The protein resides in the chloroplast. This is Small heat shock protein, chloroplastic (HSP21) from Pisum sativum (Garden pea).